The following is an 85-amino-acid chain: MAPPLSPGSRALIALIRVYQRLISPLLGPHCRFTPTCSSYGIEALRRFGVIKGSWLTVKRVLKCHPLHPGGDDPVPPGPFDTREH.

It belongs to the UPF0161 family.

The protein resides in the cell inner membrane. Could be involved in insertion of integral membrane proteins into the membrane. The sequence is that of Putative membrane protein insertion efficiency factor from Escherichia coli O6:H1 (strain CFT073 / ATCC 700928 / UPEC).